The following is a 285-amino-acid chain: GTP cyclohydrolase 1 type 2 homolog (285 aa).

A divalent metal cation is bound by residues H65, H66, D104, H230, and E234.

The protein belongs to the GTP cyclohydrolase I type 2/NIF3 family. In terms of assembly, homohexamer.

This is GTP cyclohydrolase 1 type 2 homolog from Streptomyces coelicolor (strain ATCC BAA-471 / A3(2) / M145).